The primary structure comprises 120 residues: NADH-ubiquinone oxidoreductase chain 3 (120 aa).

3 helical membrane passes run 6-26 (LLFFVEHVFIFCMIFWLLTWV), 63-83 (IVCVFLILYDVEFIFMYPFFF), and 85-105 (FFLVNAGAFLVFFVFLFFVFY).

The protein belongs to the complex I subunit 3 family.

Its subcellular location is the mitochondrion membrane. The enzyme catalyses a ubiquinone + NADH + 5 H(+)(in) = a ubiquinol + NAD(+) + 4 H(+)(out). Core subunit of the mitochondrial membrane respiratory chain NADH dehydrogenase (Complex I) that is believed to belong to the minimal assembly required for catalysis. Complex I functions in the transfer of electrons from NADH to the respiratory chain. The immediate electron acceptor for the enzyme is believed to be ubiquinone. This is NADH-ubiquinone oxidoreductase chain 3 (ND3) from Paramecium tetraurelia.